A 558-amino-acid chain; its full sequence is Adenine deaminase (558 aa).

Belongs to the metallo-dependent hydrolases superfamily. Adenine deaminase family. Requires Mn(2+) as cofactor.

It carries out the reaction adenine + H2O + H(+) = hypoxanthine + NH4(+). This Methanoregula boonei (strain DSM 21154 / JCM 14090 / 6A8) protein is Adenine deaminase.